The following is a 565-amino-acid chain: Coiled-coil domain-containing protein 17 (565 aa).

The segment at 58–87 (IMAQEKSRDQEASTSALKRLTEETAGSPGE) is disordered. 2 coiled-coil regions span residues 97–160 (ARRM…TLGA) and 219–271 (LQLQ…KVLS).

The sequence is that of Coiled-coil domain-containing protein 17 (Ccdc17) from Mus musculus (Mouse).